The following is a 251-amino-acid chain: Probable transcriptional regulatory protein Cpar_0525 (251 aa).

This sequence belongs to the TACO1 family.

The protein localises to the cytoplasm. In Chlorobaculum parvum (strain DSM 263 / NCIMB 8327) (Chlorobium vibrioforme subsp. thiosulfatophilum), this protein is Probable transcriptional regulatory protein Cpar_0525.